A 64-amino-acid polypeptide reads, in one-letter code: Prokaryotic ubiquitin-like protein Pup (64 aa).

2 stretches are compositionally biased toward basic and acidic residues: residues 1-11 and 25-34; these read MAQEQTKRTGG and GQERREKLAE. A disordered region spans residues 1 to 38; that stretch reads MAQEQTKRTGGGDEDEGSAGPEAAGQERREKLAEDTDD. Positions 21 to 58 are ARC ATPase binding; sequence PEAAGQERREKLAEDTDDLLDEIDDVLEENAEDFVRAY. A coiled-coil region spans residues 24–52; it reads AGQERREKLAEDTDDLLDEIDDVLEENAE. The residue at position 64 (Q64) is a Deamidated glutamine. Residue Q64 forms an Isoglutamyl lysine isopeptide (Gln-Lys) (interchain with K-? in acceptor proteins) linkage.

It belongs to the prokaryotic ubiquitin-like protein family. In terms of assembly, strongly interacts with the proteasome-associated ATPase ARC through a hydrophobic interface; the interacting region of Pup lies in its C-terminal half. There is one Pup binding site per ARC hexamer ring. Is modified by deamidation of its C-terminal glutamine to glutamate by the deamidase Dop, a prerequisite to the subsequent pupylation process.

It participates in protein degradation; proteasomal Pup-dependent pathway. In terms of biological role, protein modifier that is covalently attached to lysine residues of substrate proteins, thereby targeting them for proteasomal degradation. The tagging system is termed pupylation. The polypeptide is Prokaryotic ubiquitin-like protein Pup (Nocardia farcinica (strain IFM 10152)).